Consider the following 174-residue polypeptide: uncharacterized protein (174 aa).

This is an uncharacterized protein from Methanocaldococcus jannaschii (strain ATCC 43067 / DSM 2661 / JAL-1 / JCM 10045 / NBRC 100440) (Methanococcus jannaschii).